Reading from the N-terminus, the 437-residue chain is Trigger factor (437 aa).

Positions 163–248 (GDRVIIDFEG…LNNVSEATLP (86 aa)) constitute a PPIase FKBP-type domain.

The protein belongs to the FKBP-type PPIase family. Tig subfamily.

Its subcellular location is the cytoplasm. The enzyme catalyses [protein]-peptidylproline (omega=180) = [protein]-peptidylproline (omega=0). Involved in protein export. Acts as a chaperone by maintaining the newly synthesized protein in an open conformation. Functions as a peptidyl-prolyl cis-trans isomerase. This Neisseria meningitidis serogroup B (strain ATCC BAA-335 / MC58) protein is Trigger factor (tig).